The chain runs to 200 residues: NADH-quinone oxidoreductase subunit C (200 aa).

Belongs to the complex I 30 kDa subunit family. NDH-1 is composed of 14 different subunits. Subunits NuoB, C, D, E, F, and G constitute the peripheral sector of the complex.

The protein localises to the cell inner membrane. It catalyses the reaction a quinone + NADH + 5 H(+)(in) = a quinol + NAD(+) + 4 H(+)(out). NDH-1 shuttles electrons from NADH, via FMN and iron-sulfur (Fe-S) centers, to quinones in the respiratory chain. The immediate electron acceptor for the enzyme in this species is believed to be ubiquinone. Couples the redox reaction to proton translocation (for every two electrons transferred, four hydrogen ions are translocated across the cytoplasmic membrane), and thus conserves the redox energy in a proton gradient. The polypeptide is NADH-quinone oxidoreductase subunit C (Maricaulis maris (strain MCS10) (Caulobacter maris)).